The chain runs to 671 residues: Amidase chry2 (671 aa).

Cys-2 functions as the Nucleophile in the catalytic mechanism. A Glutamine amidotransferase type-2 domain is found at 2–220; it reads CGISAFITHP…PGHYLICRPN (219 aa). An Asparagine synthetase domain is found at 251–639; sequence VRERLLEAVR…TQDAMDGAFN (389 aa).

This sequence belongs to the asparagine synthetase family.

Its pathway is pigment biosynthesis. Amidase; part of the gene cluster that mediates the biosynthesis of the yellow pigment chrysogine. Pyruvic acid and anthranilic acid are likely substrates for the nonribosomal peptide synthetase chry1/NRPS14, with pyruvic acid adenylated by the first A domain and anthranilic acid by the second. If pyruvic acid and anthranilic acid are merged and released from chry1/NRPS14 by hydrolysis, a subsequent amidation would lead to 2-pyruvoylaminobenzamide. This process is probably catalyzed by the amidotransferase chry2 using glutamine as amino donor. The dehydrogenase chry5 that has a terminal berberine bridge domain for C-N cyclization could catalyze the cyclization of 2-pyruvoylaminobenzamide to yield acetyl-4(3H)-quinazolidinone. A final reduction of acetyl-4(3H)-quinazolidinone catalyzed by the oxidoreductase chry4 would result in chrysogine. This is Amidase chry2 from Gibberella zeae (strain ATCC MYA-4620 / CBS 123657 / FGSC 9075 / NRRL 31084 / PH-1) (Wheat head blight fungus).